The primary structure comprises 66 residues: uncharacterized protein (66 aa).

To E.coli YfhJ.

This is an uncharacterized protein from Pseudomonas aeruginosa (strain ATCC 15692 / DSM 22644 / CIP 104116 / JCM 14847 / LMG 12228 / 1C / PRS 101 / PAO1).